Reading from the N-terminus, the 404-residue chain is MSHAIDELQAIIADLKTELETEPKSSGGVASNSRLARDRIDRMSAEVVDSNPYSRLMALQRMNIVKDYERIRYKAVAIVGVGGVGSVTADMLTRCGIGKLILFDYDKVELANMNRLFFTPDQAGLSKVAAAAATLSFINPDVEIETHNYNITTVENFDRFLDTISQGGRIAGQPVDLVLSCVDNFEARMAINAACNERNLNWFESGVSENAVSGHIQFIRPGDTACFACAPPLVVAENIDEKTLKREGVCAASLPTTMGITAGFLVQNALKYLLNFGEVSDYLGYNALSDFFPKMTLKPNPQCDDRNCLVRQKEFQARPKPVLIEEKAVSEEPLHATNEWGIELVAEDAPESNTTPAETPVMGEGLRLAYEAPEKSSETSEETVSAATADETSLEDLMAQMKSM.

G83, D104, K127, N150, and N184 together coordinate ATP. C226 and C229 together coordinate Zn(2+). The active-site Glycyl thioester intermediate is the C250. Positions 303 and 308 each coordinate Zn(2+). Residues 372–404 (APEKSSETSEETVSAATADETSLEDLMAQMKSM) are disordered. Over residues 382-391 (ETVSAATADE) the composition is skewed to low complexity.

Belongs to the ubiquitin-activating E1 family. UBA5 subfamily. In terms of assembly, interacts (via C-terminus) with Ufc1. Interacts with Ufm1.

The protein localises to the cytoplasm. It localises to the nucleus. The protein resides in the golgi apparatus. In terms of biological role, E1-like enzyme which activates UFM1. This is Ubiquitin-like modifier-activating enzyme 5 from Drosophila melanogaster (Fruit fly).